The following is a 557-amino-acid chain: Aerobic glycerol-3-phosphate dehydrogenase (557 aa).

21 to 49 (DLVIIGGGITGAGIALDASERGMKVALVE) is a binding site for FAD.

This sequence belongs to the FAD-dependent glycerol-3-phosphate dehydrogenase family. The cofactor is FAD.

It localises to the cytoplasm. It catalyses the reaction a quinone + sn-glycerol 3-phosphate = dihydroxyacetone phosphate + a quinol. Its pathway is polyol metabolism; glycerol degradation via glycerol kinase pathway; glycerone phosphate from sn-glycerol 3-phosphate (aerobic route): step 1/1. This chain is Aerobic glycerol-3-phosphate dehydrogenase (glpD), found in Staphylococcus aureus (strain bovine RF122 / ET3-1).